Reading from the N-terminus, the 241-residue chain is Exosome complex component RRP41 homolog (241 aa).

Met-1 is subject to N-acetylmethionine.

It belongs to the RNase PH family. As to quaternary structure, component of the RNA exosome complex. Interacts with RPP4.

Its subcellular location is the cytoplasm. It localises to the nucleus. The protein resides in the nucleolus. Its function is as follows. Non-catalytic component of the RNA exosome complex which has 3'-&gt;5' exoribonuclease activity and participates in a multitude of cellular RNA processing, maturation and degradation events. In vitro, is a processive phosphorolytic exonuclease and requires a single-stranded poly(A) tail on the substrate RNA for its activity. Can complement the growth defect of a yeast mutant lacking RRP41 exonuclease. Required for normal development of female gametophytes. The chain is Exosome complex component RRP41 homolog from Arabidopsis thaliana (Mouse-ear cress).